The chain runs to 259 residues: Adenosylcobinamide-GDP ribazoletransferase (259 aa).

Transmembrane regions (helical) follow at residues Leu-43–Gly-63, Ala-64–Leu-84, Phe-116–Val-136, Pro-141–Trp-161, and Thr-185–Thr-205.

It belongs to the CobS family. Requires Mg(2+) as cofactor.

It localises to the cell inner membrane. The catalysed reaction is alpha-ribazole + adenosylcob(III)inamide-GDP = adenosylcob(III)alamin + GMP + H(+). It carries out the reaction alpha-ribazole 5'-phosphate + adenosylcob(III)inamide-GDP = adenosylcob(III)alamin 5'-phosphate + GMP + H(+). Its pathway is cofactor biosynthesis; adenosylcobalamin biosynthesis; adenosylcobalamin from cob(II)yrinate a,c-diamide: step 7/7. Joins adenosylcobinamide-GDP and alpha-ribazole to generate adenosylcobalamin (Ado-cobalamin). Also synthesizes adenosylcobalamin 5'-phosphate from adenosylcobinamide-GDP and alpha-ribazole 5'-phosphate. The sequence is that of Adenosylcobinamide-GDP ribazoletransferase from Allorhizobium ampelinum (strain ATCC BAA-846 / DSM 112012 / S4) (Agrobacterium vitis (strain S4)).